Reading from the N-terminus, the 274-residue chain is Thiamine kinase (274 aa).

This sequence belongs to the thiamine kinase family.

The catalysed reaction is thiamine + ATP = thiamine phosphate + ADP + H(+). It functions in the pathway cofactor biosynthesis; thiamine diphosphate biosynthesis; thiamine phosphate from thiamine: step 1/1. Functionally, catalyzes the ATP-dependent phosphorylation of thiamine to thiamine phosphate. Is involved in thiamine salvage. The sequence is that of Thiamine kinase from Escherichia coli O6:K15:H31 (strain 536 / UPEC).